Reading from the N-terminus, the 410-residue chain is Argininosuccinate synthase (410 aa).

10-18 (AYSGGLDTS) contacts ATP. Positions 88 and 93 each coordinate L-citrulline. Glycine 118 provides a ligand contact to ATP. The L-aspartate site is built by threonine 120, asparagine 124, and aspartate 125. Asparagine 124 provides a ligand contact to L-citrulline. L-citrulline is bound by residues arginine 128, serine 177, serine 186, glutamate 262, and tyrosine 274.

It belongs to the argininosuccinate synthase family. Type 1 subfamily. As to quaternary structure, homotetramer.

It is found in the cytoplasm. The enzyme catalyses L-citrulline + L-aspartate + ATP = 2-(N(omega)-L-arginino)succinate + AMP + diphosphate + H(+). It participates in amino-acid biosynthesis; L-arginine biosynthesis; L-arginine from L-ornithine and carbamoyl phosphate: step 2/3. The chain is Argininosuccinate synthase from Thermoanaerobacter sp. (strain X514).